We begin with the raw amino-acid sequence, 248 residues long: UDP-2,3-diacylglucosamine hydrolase (248 aa).

Residues aspartate 7, histidine 9, aspartate 40, asparagine 78, and histidine 113 each coordinate Mn(2+). 78-79 is a substrate binding site; that stretch reads NR. Residues aspartate 121, serine 159, threonine 163, lysine 166, and histidine 194 each coordinate substrate. Mn(2+) contacts are provided by histidine 194 and histidine 196.

This sequence belongs to the LpxH family. Mn(2+) is required as a cofactor.

Its subcellular location is the cell inner membrane. It catalyses the reaction UDP-2-N,3-O-bis[(3R)-3-hydroxytetradecanoyl]-alpha-D-glucosamine + H2O = 2-N,3-O-bis[(3R)-3-hydroxytetradecanoyl]-alpha-D-glucosaminyl 1-phosphate + UMP + 2 H(+). It participates in glycolipid biosynthesis; lipid IV(A) biosynthesis; lipid IV(A) from (3R)-3-hydroxytetradecanoyl-[acyl-carrier-protein] and UDP-N-acetyl-alpha-D-glucosamine: step 4/6. Its function is as follows. Hydrolyzes the pyrophosphate bond of UDP-2,3-diacylglucosamine to yield 2,3-diacylglucosamine 1-phosphate (lipid X) and UMP by catalyzing the attack of water at the alpha-P atom. Involved in the biosynthesis of lipid A, a phosphorylated glycolipid that anchors the lipopolysaccharide to the outer membrane of the cell. The sequence is that of UDP-2,3-diacylglucosamine hydrolase from Pseudomonas syringae pv. tomato (strain ATCC BAA-871 / DC3000).